We begin with the raw amino-acid sequence, 417 residues long: Serine hydroxymethyltransferase (417 aa).

Residues Leu-122 and 126 to 128 (GHL) each bind (6S)-5,6,7,8-tetrahydrofolate. N6-(pyridoxal phosphate)lysine is present on Lys-231.

Belongs to the SHMT family. In terms of assembly, homodimer. Pyridoxal 5'-phosphate serves as cofactor.

It is found in the cytoplasm. It catalyses the reaction (6R)-5,10-methylene-5,6,7,8-tetrahydrofolate + glycine + H2O = (6S)-5,6,7,8-tetrahydrofolate + L-serine. It functions in the pathway one-carbon metabolism; tetrahydrofolate interconversion. Its pathway is amino-acid biosynthesis; glycine biosynthesis; glycine from L-serine: step 1/1. Functionally, catalyzes the reversible interconversion of serine and glycine with tetrahydrofolate (THF) serving as the one-carbon carrier. This reaction serves as the major source of one-carbon groups required for the biosynthesis of purines, thymidylate, methionine, and other important biomolecules. Also exhibits THF-independent aldolase activity toward beta-hydroxyamino acids, producing glycine and aldehydes, via a retro-aldol mechanism. The protein is Serine hydroxymethyltransferase of Caldicellulosiruptor saccharolyticus (strain ATCC 43494 / DSM 8903 / Tp8T 6331).